The chain runs to 426 residues: 3-phosphoshikimate 1-carboxyvinyltransferase (426 aa).

The 3-phosphoshikimate site is built by Lys22, Ser23, and Arg27. Lys22 is a phosphoenolpyruvate binding site. 2 residues coordinate phosphoenolpyruvate: Gly96 and Arg124. 3-phosphoshikimate is bound by residues Ser170, Ser171, Gln172, Ser198, Asp314, Asn337, and Lys341. Residue Gln172 participates in phosphoenolpyruvate binding. Asp314 functions as the Proton acceptor in the catalytic mechanism. Residues Arg345, Arg387, and Lys412 each coordinate phosphoenolpyruvate.

The protein belongs to the EPSP synthase family. In terms of assembly, monomer.

The protein localises to the cytoplasm. The enzyme catalyses 3-phosphoshikimate + phosphoenolpyruvate = 5-O-(1-carboxyvinyl)-3-phosphoshikimate + phosphate. It participates in metabolic intermediate biosynthesis; chorismate biosynthesis; chorismate from D-erythrose 4-phosphate and phosphoenolpyruvate: step 6/7. Functionally, catalyzes the transfer of the enolpyruvyl moiety of phosphoenolpyruvate (PEP) to the 5-hydroxyl of shikimate-3-phosphate (S3P) to produce enolpyruvyl shikimate-3-phosphate and inorganic phosphate. The protein is 3-phosphoshikimate 1-carboxyvinyltransferase of Shewanella sediminis (strain HAW-EB3).